A 216-amino-acid polypeptide reads, in one-letter code: Uracil phosphoribosyltransferase (216 aa).

Residues R85, R110, and 135–143 (DPMVATGYS) each bind 5-phospho-alpha-D-ribose 1-diphosphate. Uracil contacts are provided by residues I200 and 205–207 (GDA). D206 is a 5-phospho-alpha-D-ribose 1-diphosphate binding site.

This sequence belongs to the UPRTase family. Mg(2+) is required as a cofactor.

It catalyses the reaction UMP + diphosphate = 5-phospho-alpha-D-ribose 1-diphosphate + uracil. The protein operates within pyrimidine metabolism; UMP biosynthesis via salvage pathway; UMP from uracil: step 1/1. Its activity is regulated as follows. Allosterically activated by GTP. Functionally, catalyzes the conversion of uracil and 5-phospho-alpha-D-ribose 1-diphosphate (PRPP) to UMP and diphosphate. This is Uracil phosphoribosyltransferase from Burkholderia ambifaria (strain MC40-6).